A 302-amino-acid chain; its full sequence is N(G),N(G)-dimethylarginine dimethylaminohydrolase (302 aa).

Substrate-binding residues include Asp-102, Arg-127, and Arg-172. Catalysis depends on His-201, which acts as the Proton donor. Residue Cys-295 is the Nucleophile of the active site.

Belongs to the DDAH family.

It carries out the reaction N(omega),N(omega)-dimethyl-L-arginine + H2O = dimethylamine + L-citrulline. The catalysed reaction is N(omega)-methyl-L-arginine + H2O = L-citrulline + methylamine. In terms of biological role, hydrolyzes N(G),N(G)-dimethyl-L-arginine (ADMA) and N(G)-monomethyl-L-arginine (MMA). This is N(G),N(G)-dimethylarginine dimethylaminohydrolase from Mycobacterium tuberculosis (strain ATCC 25618 / H37Rv).